Consider the following 526-residue polypeptide: MQSESGIVADFEVGEEFHEEPKTYYELKSQPLKSSSSAEHSGASKPPLSSSTMTSRILLRQQLMREQMQEQERREQQQKLQAAQFMQQRVAVSQTPAINVSVPTTLPSATQVPMEVLKVQTHLENPTKYHIQQAQRHQVKQYLSTTLANKHASQVLSSPCPNQPGDHAMPPVPGSSAPNSPMAMLTLNSNCEKEAFYKFEEQSRAESECPGMNTHSRASCMQMDDVIDDIISLESSYNEEILGLMDPALQMANTLPVSGNLIDLYSNQGLPPPGLTISNSCPANLPNIKRELTACIFPTESEARALAKERQKKDNHNLIERRRRFNINDRIKELGTLIPKSNDPDMRWNKGTILKASVDYIRKLQREQQRAKDLENRQKKLEHANRHLLLRVQELEMQARAHGLSLIPSTGLCSPDLVNRIIKQEPVLENCSQELVQHQADLTCTTTLDLTDGTITFTNNLGTMPESSPAYSIPRKMGSNLEDILMDDALSPVGVTDPLLSSVSPGASKTSSRRSSMSAEETEHAC.

A Phosphoserine; by MTOR modification is found at Ser5. Disordered regions lie at residues 20–54 (EPKT…STMT) and 155–179 (VLSS…SAPN). Residues 34–44 (SSSSAEHSGAS) show a composition bias toward low complexity. Position 180 is a phosphoserine; by MAPK (Ser180). A transactivation region spans residues 224-291 (DDVIDDIISL…PANLPNIKRE (68 aa)). Phosphoserine is present on Ser280. Lys289 is covalently cross-linked (Glycyl lysine isopeptide (Lys-Gly) (interchain with G-Cter in SUMO)). The bHLH domain occupies 311-364 (QKKDNHNLIERRRRFNINDRIKELGTLIPKSNDPDMRWNKGTILKASVDYIRKL). Residues 355 to 401 (KASVDYIRKLQREQQRAKDLENRQKKLEHANRHLLLRVQELEMQARA) are a coiled coil. Residues 374 to 395 (LENRQKKLEHANRHLLLRVQEL) form a leucine-zipper region. The tract at residues 401 to 431 (AHGLSLIPSTGLCSPDLVNRIIKQEPVLENC) is DNA-binding regulation. Ser405 is subject to Phosphoserine; by GSK3. Position 414 is a phosphoserine (Ser414). A Glycyl lysine isopeptide (Lys-Gly) (interchain with G-Cter in SUMO) cross-link involves residue Lys423. A Phosphoserine modification is found at Ser491. A disordered region spans residues 496-526 (TDPLLSSVSPGASKTSSRRSSMSAEETEHAC). A compositionally biased stretch (low complexity) spans 507–519 (ASKTSSRRSSMSA). At Ser516 the chain carries Phosphoserine; by RPS6KA1.

This sequence belongs to the MiT/TFE family. In terms of assembly, homodimer or heterodimer; dimerization is mediated via the coiled coil region. Efficient DNA binding requires dimerization with another bHLH protein. Binds DNA in the form of homodimer or heterodimer with either TFE3, TFEB or TFEC. Interacts with small GTPases Rag (RagA/RRAGA, RagB/RRAGB, RagC/RRAGC and/or RagD/RRAGD); promoting its recruitment to lysosomal membrane in the presence of nutrients. Interacts with KARS1. Identified in a complex with HINT1 and CTNNB1. Interacts with VSX2. Post-translationally, when nutrients are present, phosphorylation by MTOR at Ser-5 via non-canonical mTORC1 pathway promotes ubiquitination by the SCF(BTRC) complex, followed by degradation. Phosphorylation at Ser-405 significantly enhances the ability to bind the tyrosinase promoter. Phosphorylation by MARK3/cTAK1 at Ser-280 promotes association with 14-3-3/YWHA adapters and retention in the cytosol. Phosphorylated at Ser-180 and Ser-516 following KIT signaling, triggering a short live activation: Phosphorylation at Ser-180 and Ser-516 by MAPK and RPS6KA1, respectively, activate the transcription factor activity but also promote ubiquitination and subsequent degradation by the proteasome. Phosphorylated in response to blue light (415nm). In terms of processing, ubiquitinated by the SCF(BTRC) and SCF(FBXW11) complexes following phosphorylation ar Ser-5 by MTOR, leading to its degradation by the proteasome. Ubiquitinated following phosphorylation at Ser-180, leading to subsequent degradation by the proteasome. Deubiquitinated by USP13, preventing its degradation. In the adult, expressed at high levels in the heart, skin, skeletal muscle, intestine, stomach, kidney, ovary, lung, spleen and brain. In the embryo, expressed in developing eye, ear, skin and heart. Isoform M is expressed in melanocytes and also in the embryonic and adult heart while isoform A and isoform H are more widely expressed.

It localises to the nucleus. The protein localises to the cytoplasm. It is found in the lysosome membrane. Functionally, transcription factor that acts as a master regulator of melanocyte survival and differentiation as well as melanosome biogenesis. Binds to M-boxes (5'-TCATGTG-3') and symmetrical DNA sequences (E-boxes) (5'-CACGTG-3') found in the promoter of pigmentation genes, such as tyrosinase (TYR). Involved in the cellular response to amino acid availability by acting downstream of MTOR: in the presence of nutrients, MITF phosphorylation by MTOR promotes its inactivation. Upon starvation or lysosomal stress, inhibition of MTOR induces MITF dephosphorylation, resulting in transcription factor activity. Plays an important role in melanocyte development by regulating the expression of tyrosinase (TYR) and tyrosinase-related protein 1 (TYRP1). Plays a critical role in the differentiation of various cell types, such as neural crest-derived melanocytes, mast cells, osteoclasts and optic cup-derived retinal pigment epithelium. The sequence is that of Microphthalmia-associated transcription factor (Mitf) from Mus musculus (Mouse).